A 153-amino-acid polypeptide reads, in one-letter code: 3-hydroxyacyl-[acyl-carrier-protein] dehydratase FabZ (153 aa).

The active site involves His54.

Belongs to the thioester dehydratase family. FabZ subfamily.

It is found in the cytoplasm. It catalyses the reaction a (3R)-hydroxyacyl-[ACP] = a (2E)-enoyl-[ACP] + H2O. In terms of biological role, involved in unsaturated fatty acids biosynthesis. Catalyzes the dehydration of short chain beta-hydroxyacyl-ACPs and long chain saturated and unsaturated beta-hydroxyacyl-ACPs. The protein is 3-hydroxyacyl-[acyl-carrier-protein] dehydratase FabZ of Shewanella amazonensis (strain ATCC BAA-1098 / SB2B).